Here is a 245-residue protein sequence, read N- to C-terminus: 14-3-3 protein zeta/delta (245 aa).

Met1 bears the N-acetylmethionine mark. Lys3 carries the post-translational modification N6-acetyllysine. A Phosphoserine; by PKA modification is found at Ser58. An N6-acetyllysine modification is found at Lys68. Phosphoserine is present on residues Ser184, Ser207, and Ser210. A Phosphothreonine; by CK1 modification is found at Thr232.

The protein belongs to the 14-3-3 family. As to quaternary structure, homodimer. Heterodimerizes with YWHAE. Homo- and heterodimerization is inhibited by phosphorylation on Ser-58. Interacts with FOXO4, NOXA1, SSH1 and ARHGEF2. Interacts with CDK16 and with WEE1 (C-terminal). Interacts with MLF1 (phosphorylated form); the interaction retains it in the cytoplasm. Interacts with BSPRY. Interacts with Thr-phosphorylated ITGB2. Interacts with Pseudomonas aeruginosa exoS (unphosphorylated form). Interacts with BAX; the interaction occurs in the cytoplasm. Under stress conditions, MAPK8-mediated phosphorylation releases BAX to mitochondria. Interacts with phosphorylated RAF1; the interaction is inhibited when YWHAZ is phosphorylated on Thr-232. Interacts with TP53; the interaction enhances p53 transcriptional activity. The Ser-58 phosphorylated form inhibits this interaction and p53 transcriptional activity. Interacts with ABL1 (phosphorylated form); the interaction retains ABL1 in the cytoplasm. Interacts with PKA-phosphorylated AANAT; the interaction modulates AANAT enzymatic activity by increasing affinity for arylalkylamines and acetyl-CoA and protecting the enzyme from dephosphorylation and proteasomal degradation. It may also prevent thiol-dependent inactivation. Interacts with AKT1; the interaction phosphorylates YWHAZ and modulates dimerization. Interacts with GAB2. Interacts with SAMSN1. Interacts with BCL2L11 and TLK2. Interacts with the 'Thr-369' phosphorylated form of DAPK2. Interacts with PI4KB, TBC1D22A and TBC1D22B. Interacts with ZFP36L1 (via phosphorylated form); this interaction occurs in a p38 MAPK- and AKT-signaling pathways. Interacts with SLITRK1. Interacts with AK5, LDB1, MADD, PDE1A and SMARCB1. Interacts with ARHGEF7 and GIT1. Interacts with MEFV. Interacts with ADAM22 (via C-terminus). The delta, brain-specific form differs from the zeta form in being phosphorylated. Phosphorylation on Ser-184 by MAPK8; promotes dissociation of BAX and translocation of BAX to mitochondria. Phosphorylation on Thr-232; inhibits binding of RAF1. Phosphorylated on Ser-58 by PKA and protein kinase C delta type catalytic subunit in a sphingosine-dependent fashion. Phosphorylation on Ser-58 by PKA; disrupts homodimerization and heterodimerization with YHAE and TP53.

It localises to the cytoplasm. The protein localises to the melanosome. Its function is as follows. Adapter protein implicated in the regulation of a large spectrum of both general and specialized signaling pathways. Binds to a large number of partners, usually by recognition of a phosphoserine or phosphothreonine motif. Binding generally results in the modulation of the activity of the binding partner. Promotes cytosolic retention and inactivation of TFEB transcription factor by binding to phosphorylated TFEB. Induces ARHGEF7 activity on RAC1 as well as lamellipodia and membrane ruffle formation. In neurons, regulates spine maturation through the modulation of ARHGEF7 activity. This chain is 14-3-3 protein zeta/delta (Ywhaz), found in Mus musculus (Mouse).